The following is an 827-amino-acid chain: Cadherin-17 (827 aa).

Positions 1–21 are cleaved as a signal peptide; that stretch reads MVSAQLHFLCLLTLYLTGAYG. Topologically, residues 22-786 are extracellular; the sequence is QEGKFSGPLK…NQVGIPTVGM (765 aa). Cadherin domains follow at residues 29 to 127, 128 to 243, 244 to 339, 340 to 448, 449 to 565, 566 to 666, and 667 to 776; these read PLKP…TFLQ, TKYE…APEP, VEIR…PPTC, LSQV…IPIF, ERSD…VPVF, PQQI…PPRL, and AKDY…RPAG. Asparagine 148, asparagine 183, asparagine 249, asparagine 418, asparagine 545, asparagine 573, and asparagine 721 each carry an N-linked (GlcNAc...) asparagine glycan. A helical transmembrane segment spans residues 787 to 807; sequence AVGILLTTFLVIGIILAVVFI. Topologically, residues 808-827 are cytoplasmic; sequence RMRKDKVEDPQSPENKPLRS.

As to expression, liver and intestine.

It is found in the cell membrane. Its function is as follows. Cadherins are calcium-dependent cell adhesion proteins. They preferentially interact with themselves in a homophilic manner in connecting cells; cadherins may thus contribute to the sorting of heterogeneous cell types. LI-cadherin may have a role in the morphological organization of liver and intestine. This chain is Cadherin-17 (Cdh17), found in Rattus norvegicus (Rat).